The sequence spans 259 residues: UPF0246 protein SG0407 (259 aa).

This sequence belongs to the UPF0246 family.

This chain is UPF0246 protein SG0407, found in Sodalis glossinidius (strain morsitans).